Here is a 564-residue protein sequence, read N- to C-terminus: ATP-dependent RNA helicase ROK1 (564 aa).

2 disordered regions span residues 1-45 (MDIF…ESQI) and 62-87 (EDDREKTTENDSPNKEEKSGNDDGLI). Composition is skewed to basic and acidic residues over residues 13-23 (VKKESGPKAKA), 33-45 (DENHKEDNNESQI), and 62-86 (EDDREKTTENDSPNKEEKSGNDDGL). Residues 122 to 150 (DLISRFSFDKRLLNNLIENGFTEPTPIQC) carry the Q motif motif. A Helicase ATP-binding domain is found at 153-333 (IPVALNNRDV…QSIMMDPVRV (181 aa)). 166 to 173 (GPTGSGKT) is a binding site for ATP. Residues 280 to 283 (DEAD) carry the DEAD box motif. The 163-residue stretch at 344–506 (NIEQKLIFCG…EVSEWMDKMA (163 aa)) folds into the Helicase C-terminal domain. The tract at residues 512-564 (EKESIKNGKAHKERKQITTVPKMDKAKRRRQQEMIAASKRRKNEELSKKHFSK) is disordered. The span at 553–564 (KNEELSKKHFSK) shows a compositional bias: basic and acidic residues.

It belongs to the DEAD box helicase family. DDX52/ROK1 subfamily. As to quaternary structure, interacts with the U3 snoRNA and is associated with the 90S and 40S pre-ribosomes. This association requires the presence of RRP5. Also interacts with OSH3.

Its subcellular location is the nucleus. The protein localises to the nucleolus. The catalysed reaction is ATP + H2O = ADP + phosphate + H(+). ATP-dependent RNA helicase involved in 40S ribosomal subunit biogenesis. Required for the processing and cleavage of 35S pre-rRNA at sites A0, A1, and A2, leading to mature 18S rRNA. May also have a gene-specific regulatory function since it affects nuclear fusion by regulating KAR4 expression and contributes with KEM1 to ISP-1 sensitivity. This chain is ATP-dependent RNA helicase ROK1 (ROK1), found in Saccharomyces cerevisiae (strain ATCC 204508 / S288c) (Baker's yeast).